The sequence spans 137 residues: Small ribosomal subunit protein uS11 (137 aa).

The interval Met1–Pro25 is disordered. Residues Arg15–Pro25 show a composition bias toward basic residues.

This sequence belongs to the universal ribosomal protein uS11 family. As to quaternary structure, part of the 30S ribosomal subunit. Interacts with proteins S7 and S18. Binds to IF-3.

Its function is as follows. Located on the platform of the 30S subunit, it bridges several disparate RNA helices of the 16S rRNA. Forms part of the Shine-Dalgarno cleft in the 70S ribosome. This Thermomicrobium roseum (strain ATCC 27502 / DSM 5159 / P-2) protein is Small ribosomal subunit protein uS11.